The following is a 62-amino-acid chain: Large ribosomal subunit protein bL28 (62 aa).

This sequence belongs to the bacterial ribosomal protein bL28 family.

This Caldicellulosiruptor bescii (strain ATCC BAA-1888 / DSM 6725 / KCTC 15123 / Z-1320) (Anaerocellum thermophilum) protein is Large ribosomal subunit protein bL28.